The chain runs to 500 residues: Probable cytosol aminopeptidase (500 aa).

Residues Lys-268 and Asp-273 each contribute to the Mn(2+) site. Residue Lys-280 is part of the active site. The Mn(2+) site is built by Asp-291, Asp-350, and Glu-352. Residue Arg-354 is part of the active site.

This sequence belongs to the peptidase M17 family. It depends on Mn(2+) as a cofactor.

It localises to the cytoplasm. It catalyses the reaction Release of an N-terminal amino acid, Xaa-|-Yaa-, in which Xaa is preferably Leu, but may be other amino acids including Pro although not Arg or Lys, and Yaa may be Pro. Amino acid amides and methyl esters are also readily hydrolyzed, but rates on arylamides are exceedingly low.. The catalysed reaction is Release of an N-terminal amino acid, preferentially leucine, but not glutamic or aspartic acids.. Functionally, presumably involved in the processing and regular turnover of intracellular proteins. Catalyzes the removal of unsubstituted N-terminal amino acids from various peptides. In Aromatoleum aromaticum (strain DSM 19018 / LMG 30748 / EbN1) (Azoarcus sp. (strain EbN1)), this protein is Probable cytosol aminopeptidase.